The chain runs to 164 residues: Lipoprotein signal peptidase (164 aa).

3 helical membrane-spanning segments follow: residues 12 to 32 (WLWLVVVVLIIDLGSKYLILQ), 70 to 90 (WFFAGIAIGISVLLAVMMYRS), and 102 to 122 (ALIIGGALGNLFDRLWHGFVV). Active-site residues include D123 and D141. Residues 137–157 (FNLADTAICVGAALIVLEGFL) form a helical membrane-spanning segment.

Belongs to the peptidase A8 family.

It localises to the cell inner membrane. The enzyme catalyses Release of signal peptides from bacterial membrane prolipoproteins. Hydrolyzes -Xaa-Yaa-Zaa-|-(S,diacylglyceryl)Cys-, in which Xaa is hydrophobic (preferably Leu), and Yaa (Ala or Ser) and Zaa (Gly or Ala) have small, neutral side chains.. It participates in protein modification; lipoprotein biosynthesis (signal peptide cleavage). Functionally, this protein specifically catalyzes the removal of signal peptides from prolipoproteins. The protein is Lipoprotein signal peptidase of Shigella flexneri.